Reading from the N-terminus, the 966-residue chain is Alanine--tRNA ligase, cytoplasmic (966 aa).

Residues His604, His608, Cys723, and His727 each contribute to the Zn(2+) site.

Belongs to the class-II aminoacyl-tRNA synthetase family. Monomer. It depends on Zn(2+) as a cofactor.

It is found in the cytoplasm. It catalyses the reaction tRNA(Ala) + L-alanine + ATP = L-alanyl-tRNA(Ala) + AMP + diphosphate. In terms of biological role, catalyzes the attachment of alanine to tRNA(Ala) in a two-step reaction: alanine is first activated by ATP to form Ala-AMP and then transferred to the acceptor end of tRNA(Ala). Also edits incorrectly charged tRNA(Ala) via its editing domain. This Drosophila melanogaster (Fruit fly) protein is Alanine--tRNA ligase, cytoplasmic.